The primary structure comprises 173 residues: Inorganic pyrophosphatase (173 aa).

Substrate contacts are provided by Lys29, Arg43, and Tyr55. Asp65, Asp70, and Asp102 together coordinate Mg(2+). Tyr141 is a binding site for substrate.

This sequence belongs to the PPase family. Homohexamer. The cofactor is Mg(2+).

Its subcellular location is the cytoplasm. The enzyme catalyses diphosphate + H2O = 2 phosphate + H(+). In terms of biological role, catalyzes the hydrolysis of inorganic pyrophosphate (PPi) forming two phosphate ions. The polypeptide is Inorganic pyrophosphatase (Rickettsia felis (strain ATCC VR-1525 / URRWXCal2) (Rickettsia azadi)).